The following is a 126-amino-acid chain: MAQGSGSAERALVLGVVLVFLVFNCEVAESVVYTVGDGGGWTFGTSGWPAGKTFRAGDVLVFKYNPAVHNVVSVPAGGYKSCTASPGSRVFKSGDDRITLSRGTNYFICSVPGHCQGGLKIAVTAA.

The first 30 residues, 1-30 (MAQGSGSAERALVLGVVLVFLVFNCEVAES), serve as a signal peptide directing secretion. One can recognise a Phytocyanin domain in the interval 31–126 (VVYTVGDGGG…GGLKIAVTAA (96 aa)). Cu cation contacts are provided by His-69, Cys-109, and His-114. An intrachain disulfide couples Cys-82 to Cys-115.

As to expression, strongly expressed in stigma and style and to a lesser extent in leaves, ovary and petals. Not detected in pollen tubes, mature anthers or roots.

In terms of biological role, diffusible chemotropic factor that induces pollen tube chemotropism. The protein is Chemocyanin of Lilium longiflorum (Trumpet lily).